Here is a 161-residue protein sequence, read N- to C-terminus: Protein-export protein SecB (161 aa).

It belongs to the SecB family. In terms of assembly, homotetramer, a dimer of dimers. One homotetramer interacts with 1 SecA dimer.

It is found in the cytoplasm. Its function is as follows. One of the proteins required for the normal export of preproteins out of the cell cytoplasm. It is a molecular chaperone that binds to a subset of precursor proteins, maintaining them in a translocation-competent state. It also specifically binds to its receptor SecA. The chain is Protein-export protein SecB from Ectopseudomonas mendocina (strain ymp) (Pseudomonas mendocina).